Reading from the N-terminus, the 383-residue chain is Chaperone protein DnaJ (383 aa).

In terms of domain architecture, J spans 5 to 70 (DYYELLGVSR…QKRAAYDRFG (66 aa)). A CR-type zinc finger spans residues 140-219 (GTKTEIRVPT…CSGAGTVPRE (80 aa)). Zn(2+)-binding residues include C153, C156, C171, C174, C193, C196, C207, and C210. CXXCXGXG motif repeat units lie at residues 153 to 160 (CDACSGTG), 171 to 178 (CPTCGGAG), 193 to 200 (CPTCGGAG), and 207 to 214 (CRVCSGAG).

It belongs to the DnaJ family. In terms of assembly, homodimer. It depends on Zn(2+) as a cofactor.

Its subcellular location is the cytoplasm. Functionally, participates actively in the response to hyperosmotic and heat shock by preventing the aggregation of stress-denatured proteins and by disaggregating proteins, also in an autonomous, DnaK-independent fashion. Unfolded proteins bind initially to DnaJ; upon interaction with the DnaJ-bound protein, DnaK hydrolyzes its bound ATP, resulting in the formation of a stable complex. GrpE releases ADP from DnaK; ATP binding to DnaK triggers the release of the substrate protein, thus completing the reaction cycle. Several rounds of ATP-dependent interactions between DnaJ, DnaK and GrpE are required for fully efficient folding. Also involved, together with DnaK and GrpE, in the DNA replication of plasmids through activation of initiation proteins. The protein is Chaperone protein DnaJ of Acidiphilium cryptum (strain JF-5).